We begin with the raw amino-acid sequence, 453 residues long: Bifunctional protein GlmU (453 aa).

Positions 1–226 (MSFSAVILAA…PIEVEGVNNR (226 aa)) are pyrophosphorylase. UDP-N-acetyl-alpha-D-glucosamine-binding positions include 8–11 (LAAG), lysine 22, glutamine 73, 78–79 (GT), 100–102 (YGD), glycine 137, glutamate 151, asparagine 166, and asparagine 224. Aspartate 102 provides a ligand contact to Mg(2+). Asparagine 224 contributes to the Mg(2+) binding site. Positions 227 to 247 (IQLARLERAYQAMQAERLLEQ) are linker. Residues 248 to 453 (GVMLRDPSRF…KGWKRPVKQK (206 aa)) are N-acetyltransferase. UDP-N-acetyl-alpha-D-glucosamine-binding residues include arginine 330 and lysine 348. Catalysis depends on histidine 360, which acts as the Proton acceptor. Residues tyrosine 363 and asparagine 374 each coordinate UDP-N-acetyl-alpha-D-glucosamine. Residues alanine 377, 383–384 (NY), serine 402, alanine 420, and arginine 437 contribute to the acetyl-CoA site.

It in the N-terminal section; belongs to the N-acetylglucosamine-1-phosphate uridyltransferase family. In the C-terminal section; belongs to the transferase hexapeptide repeat family. As to quaternary structure, homotrimer. Mg(2+) serves as cofactor.

The protein localises to the cytoplasm. The enzyme catalyses alpha-D-glucosamine 1-phosphate + acetyl-CoA = N-acetyl-alpha-D-glucosamine 1-phosphate + CoA + H(+). It catalyses the reaction N-acetyl-alpha-D-glucosamine 1-phosphate + UTP + H(+) = UDP-N-acetyl-alpha-D-glucosamine + diphosphate. The protein operates within nucleotide-sugar biosynthesis; UDP-N-acetyl-alpha-D-glucosamine biosynthesis; N-acetyl-alpha-D-glucosamine 1-phosphate from alpha-D-glucosamine 6-phosphate (route II): step 2/2. Its pathway is nucleotide-sugar biosynthesis; UDP-N-acetyl-alpha-D-glucosamine biosynthesis; UDP-N-acetyl-alpha-D-glucosamine from N-acetyl-alpha-D-glucosamine 1-phosphate: step 1/1. It functions in the pathway bacterial outer membrane biogenesis; LPS lipid A biosynthesis. Its function is as follows. Catalyzes the last two sequential reactions in the de novo biosynthetic pathway for UDP-N-acetylglucosamine (UDP-GlcNAc). The C-terminal domain catalyzes the transfer of acetyl group from acetyl coenzyme A to glucosamine-1-phosphate (GlcN-1-P) to produce N-acetylglucosamine-1-phosphate (GlcNAc-1-P), which is converted into UDP-GlcNAc by the transfer of uridine 5-monophosphate (from uridine 5-triphosphate), a reaction catalyzed by the N-terminal domain. This chain is Bifunctional protein GlmU, found in Photobacterium profundum (strain SS9).